The following is a 597-amino-acid chain: NADH-quinone oxidoreductase subunits H/I (597 aa).

The NADH-quinone oxidoreductase subunit H stretch occupies residues 1-405 (MPDLSLFGHD…FPTPPVPADA (405 aa)). 9 consecutive transmembrane segments (helical) span residues 12–32 (FWLV…IPLV), 82–102 (PIYL…FAVI), 124–144 (VGVL…VLAG), 170–190 (MALC…SGIV), 195–215 (PTWF…SMVG), 260–280 (ALAT…NLIP), 286–306 (WWGL…FVWL), 318–338 (FMRL…MLVA), and 351–371 (ATGA…GLFL). Positions 406–597 (HRVDNPKGGL…APAGAKGGAR (192 aa)) are NADH-quinone oxidoreductase subunit I. 2 consecutive 4Fe-4S ferredoxin-type domains span residues 455-485 (LNRH…VEGA) and 501-530 (RVYQ…MTND). Positions 465, 468, 471, 475, 510, 513, 516, and 520 each coordinate [4Fe-4S] cluster.

In the N-terminal section; belongs to the complex I subunit 1 family. This sequence in the C-terminal section; belongs to the complex I 23 kDa subunit family. As to quaternary structure, NDH-1 is composed of 13 different subunits. Subunits NuoA, H/I, J, K, L, M, N constitute the membrane sector of the complex. [4Fe-4S] cluster serves as cofactor.

It is found in the cell membrane. It carries out the reaction a quinone + NADH + 5 H(+)(in) = a quinol + NAD(+) + 4 H(+)(out). Functionally, NDH-1 shuttles electrons from NADH, via FMN and iron-sulfur (Fe-S) centers, to quinones in the respiratory chain. The immediate electron acceptor for the enzyme in this species is believed to be ubiquinone. Couples the redox reaction to proton translocation (for every two electrons transferred, four hydrogen ions are translocated across the cytoplasmic membrane), and thus conserves the redox energy in a proton gradient. This subunit may bind ubiquinone. The protein is NADH-quinone oxidoreductase subunits H/I (nuoH/I) of Nocardia farcinica (strain IFM 10152).